Reading from the N-terminus, the 53-residue chain is U13-myrmicitoxin-Tb1a (53 aa).

A signal peptide spans 1–23 (MKLIYIFSLVAVIAVTMIPGIMG). The propeptide occupies 24–29 (EAEAEG). At Lys52 the chain carries Lysine amide.

As to expression, expressed by the venom gland.

The protein resides in the secreted. In vivo, this neurotoxin paralyzes about 70% of blowflies (L.caesar) one hour after intrathoracic injection, when tested at high doses (45 nmol/g). This Tetramorium bicarinatum (Tramp ant) protein is U13-myrmicitoxin-Tb1a.